A 238-amino-acid polypeptide reads, in one-letter code: MAEARLQRLLRVYVLDTSALTDTRLRSLLGSGSLDEAVRRFAELIASVRIAYGVEVYMPPTVYEEARRFLLSNGVTVQSFEALAAWITIKPPTRHEIRIPASIVRDYVEEVRARLARGLRVAEEHVRRAFEAGGLYAAETASREARREKLGAIIRGLRERYREATRHGMLDSVEDLDAVLLALEVRGVLVSNDEGVRRFAEALGVISIDPPKFISVLQGLLRHSKTGGVAREEAHSTS.

It belongs to the HARP family.

The enzyme catalyses Endonucleolytic cleavage of RNA, removing 5'-extranucleotides from tRNA precursor.. Functionally, RNA-free RNase P that catalyzes the removal of the 5'-leader sequence from pre-tRNA to produce the mature 5'-terminus. This is RNA-free ribonuclease P from Hyperthermus butylicus (strain DSM 5456 / JCM 9403 / PLM1-5).